Here is a 723-residue protein sequence, read N- to C-terminus: Preterminal protein (723 aa).

The Nuclear localization signal motif lies at 453-462 (RLPMRRRRRR). Residues 457–492 (RRRRRRAPPPPPMSEELSEPEVEAFPPASPPRRSFE) are disordered. Position 651 is an O-(5'-phospho-DNA)-serine (serine 651).

It belongs to the adenoviridae terminal protein family. Heterodimer with the polymerase; this heterodimer binds to bp 9 to 18 of the genome. Interacts with host POU2F1; POU2F1 binds to the auxiliary sequences in the inverted terminal repeats and tethers the pTP-POL heterodimer to the origin DNA thereby participating in the assembly of the pre-initiation complex (POL-TP-DBP-NFIA-POU2F1). Preterminal protein is used to replicate viral genome, upon genomic encapsidation it is processed first into iTP and finally into TP by adenovirus protease.

It is found in the host nucleus matrix. Functionally, protein covalently bound to the viral DNA that acts as a primer for viral genomic replication by DNA strand displacement. Assembles on the viral origin of replication in an initiation complex with viral polymerase, DBP, host NFIA and host POU2F1/OCT1. During initiation, the polymerase covalently couples the first dCTP with Ser-580 of pTP. The terminal protein stimulates the template activity over 20 fold compared to protein-free templates. Neo-synthesized viral genomes are linked to two preterminal proteins, one for each 5' end. These new genomes are encapsidated in the nucleus, and during capsid maturation by viral protease, preterminal protein is first cleaved into intermediary (iTP), then into mature TP. May play a role in host nuclear matrix localization of genomic DNA. In Canis lupus familiaris (Dog), this protein is Preterminal protein.